The following is a 367-amino-acid chain: 3-dehydroquinate synthase (367 aa).

NAD(+)-binding positions include 108–112 (GVIGD), 132–133 (TT), Lys-145, and Lys-154. Residues Glu-187, His-249, and His-267 each coordinate Zn(2+).

It belongs to the sugar phosphate cyclases superfamily. Dehydroquinate synthase family. Requires Co(2+) as cofactor. Zn(2+) serves as cofactor. The cofactor is NAD(+).

It is found in the cytoplasm. The catalysed reaction is 7-phospho-2-dehydro-3-deoxy-D-arabino-heptonate = 3-dehydroquinate + phosphate. The protein operates within metabolic intermediate biosynthesis; chorismate biosynthesis; chorismate from D-erythrose 4-phosphate and phosphoenolpyruvate: step 2/7. In terms of biological role, catalyzes the conversion of 3-deoxy-D-arabino-heptulosonate 7-phosphate (DAHP) to dehydroquinate (DHQ). The chain is 3-dehydroquinate synthase from Paracoccus denitrificans (strain Pd 1222).